The sequence spans 293 residues: Prohibitin-2 (293 aa).

Residues 21–41 (FGGGFGLLALGGVGLLALSSL) form a helical; Signal-anchor for type II membrane protein membrane-spanning segment. Residues 190 to 235 (GREYAAAIEAKQVAQQEAERARFLVEKALQDKRSIIVKAEGEAQSA) adopt a coiled-coil conformation.

The protein belongs to the prohibitin family. The mitochondrial prohibitin complex consists of two subunits (PHB1 and PHB2), assembled into a membrane-associated ring-shaped supercomplex of approximately 1 mDa.

It localises to the mitochondrion inner membrane. Its subcellular location is the cytoplasm. The protein resides in the nucleus. It is found in the cell membrane. Protein with pleiotropic attributes mediated in a cell-compartment- and tissue-specific manner, which include the plasma membrane-associated cell signaling functions, mitochondrial chaperone, and transcriptional co-regulator of transcription factors and sex steroid hormones in the nucleus. Functionally, in the mitochondria, together with PHB, forms large ring complexes (prohibitin complexes) in the inner mitochondrial membrane (IMM) and functions as a chaperone protein that stabilizes mitochondrial respiratory enzymes and maintains mitochondrial integrity in the IMM, which is required for mitochondrial morphogenesis, neuronal survival, and normal lifespan. Its function is as follows. In the nucleus, serves as transcriptional co-regulator. The polypeptide is Prohibitin-2 (phbB) (Dictyostelium discoideum (Social amoeba)).